The primary structure comprises 209 residues: MDQQKIPQATAKRLPLYYRFIQNLSLSGKQRVSSAELSEAVKVDSATIRRDFSYFGALGKKGYGYNVNYLLSFFRETLDQDDITRVALIGVGNLGTAFLHYNFTKNNNTKIEMAFDVSEEKVGTEIGGIPVYHLDELEERLSNDIQVAILTVPATVAQAVADRLAETSVHGILNFTPARLNVSENIRIHHIDLAVELQTLVYFLKNYPQ.

Residues 16-55 (LYYRFIQNLSLSGKQRVSSAELSEAVKVDSATIRRDFSYF) constitute a DNA-binding region (H-T-H motif). An NAD(+)-binding site is contributed by 90–95 (GVGNLG).

It belongs to the transcriptional regulatory Rex family. Homodimer.

It localises to the cytoplasm. Functionally, modulates transcription in response to changes in cellular NADH/NAD(+) redox state. This Bacillus cereus (strain G9842) protein is Redox-sensing transcriptional repressor Rex.